A 207-amino-acid chain; its full sequence is ADP-ribosylation factor (207 aa).

Residue Gly-2 is the site of N-myristoyl glycine attachment. Residues 32–39 (GLDGAGKT), 75–79 (DIGGQ), and 133–136 (NKID) each bind GTP.

The protein belongs to the small GTPase superfamily. Arf family.

It is found in the golgi apparatus. Its function is as follows. GTP-binding protein involved in protein trafficking; may modulate vesicle budding and uncoating within the Golgi apparatus. The sequence is that of ADP-ribosylation factor (ARF-1) from Encephalitozoon cuniculi (strain GB-M1) (Microsporidian parasite).